A 715-amino-acid polypeptide reads, in one-letter code: Fatty acid oxidation complex subunit alpha (715 aa).

The segment at 1–190 (MTTTSAFMLN…RAGLVDDVVP (190 aa)) is enoyl-CoA hydratase. The tract at residues 306–715 (GPLNSVGILG…WTNGETDQGN (410 aa)) is 3-hydroxyacyl-CoA dehydrogenase.

This sequence in the N-terminal section; belongs to the enoyl-CoA hydratase/isomerase family. The protein in the central section; belongs to the 3-hydroxyacyl-CoA dehydrogenase family. In terms of assembly, heterotetramer of two alpha chains (FadJ) and two beta chains (FadI).

It is found in the cytoplasm. It catalyses the reaction a (3S)-3-hydroxyacyl-CoA = a (2E)-enoyl-CoA + H2O. It carries out the reaction a 4-saturated-(3S)-3-hydroxyacyl-CoA = a (3E)-enoyl-CoA + H2O. The catalysed reaction is a (3S)-3-hydroxyacyl-CoA + NAD(+) = a 3-oxoacyl-CoA + NADH + H(+). The enzyme catalyses (3S)-3-hydroxybutanoyl-CoA = (3R)-3-hydroxybutanoyl-CoA. Its pathway is lipid metabolism; fatty acid beta-oxidation. Catalyzes the formation of a hydroxyacyl-CoA by addition of water on enoyl-CoA. Also exhibits 3-hydroxyacyl-CoA epimerase and 3-hydroxyacyl-CoA dehydrogenase activities. In Salmonella schwarzengrund (strain CVM19633), this protein is Fatty acid oxidation complex subunit alpha.